A 399-amino-acid chain; its full sequence is Glucose-1-phosphate adenylyltransferase (399 aa).

Residues G158, 174-175, and S192 each bind alpha-D-glucose 1-phosphate; that span reads EK.

The protein belongs to the bacterial/plant glucose-1-phosphate adenylyltransferase family. Homotetramer.

It carries out the reaction alpha-D-glucose 1-phosphate + ATP + H(+) = ADP-alpha-D-glucose + diphosphate. It functions in the pathway glycan biosynthesis; glycogen biosynthesis. In terms of biological role, involved in the biosynthesis of ADP-glucose, a building block required for the elongation reactions to produce glycogen. Catalyzes the reaction between ATP and alpha-D-glucose 1-phosphate (G1P) to produce pyrophosphate and ADP-Glc. In Streptomyces coelicolor (strain ATCC BAA-471 / A3(2) / M145), this protein is Glucose-1-phosphate adenylyltransferase.